The following is a 97-amino-acid chain: Acylphosphatase (97 aa).

One can recognise an Acylphosphatase-like domain in the interval 5–92 (RAHVWISGRV…GEFVRFEITF (88 aa)). Active-site residues include Arg-20 and Asn-38.

The protein belongs to the acylphosphatase family.

The enzyme catalyses an acyl phosphate + H2O = a carboxylate + phosphate + H(+). The sequence is that of Acylphosphatase (acyP) from Syntrophobacter fumaroxidans (strain DSM 10017 / MPOB).